Here is a 198-residue protein sequence, read N- to C-terminus: ATP-dependent Clp protease proteolytic subunit (198 aa).

S98 functions as the Nucleophile in the catalytic mechanism. The active site involves H123.

Belongs to the peptidase S14 family. As to quaternary structure, fourteen ClpP subunits assemble into 2 heptameric rings which stack back to back to give a disk-like structure with a central cavity, resembling the structure of eukaryotic proteasomes.

It localises to the cytoplasm. It catalyses the reaction Hydrolysis of proteins to small peptides in the presence of ATP and magnesium. alpha-casein is the usual test substrate. In the absence of ATP, only oligopeptides shorter than five residues are hydrolyzed (such as succinyl-Leu-Tyr-|-NHMec, and Leu-Tyr-Leu-|-Tyr-Trp, in which cleavage of the -Tyr-|-Leu- and -Tyr-|-Trp bonds also occurs).. In terms of biological role, cleaves peptides in various proteins in a process that requires ATP hydrolysis. Has a chymotrypsin-like activity. Plays a major role in the degradation of misfolded proteins. In Halothermothrix orenii (strain H 168 / OCM 544 / DSM 9562), this protein is ATP-dependent Clp protease proteolytic subunit.